Reading from the N-terminus, the 863-residue chain is DNA replication licensing factor mcm4 (863 aa).

The tract at residues 1 to 121 (MSSPTSTPSR…ARQRPDLGSA (121 aa)) is disordered. Composition is skewed to polar residues over residues 54 to 64 (SPSGDLQSPSG) and 78 to 99 (SALQSELDLSSPLTYGTPSSRV). The C4-type zinc finger occupies 306–331 (CQVCAFTTRVEIDRGRISEPSVCKHC). The 210-residue stretch at 458 to 667 (IYERLASALA…YDRRLAHHLV (210 aa)) folds into the MCM domain. ATP is bound by residues Tyr471, Arg497, Lys516, Ser517, Asn618, Arg643, Arg732, and Glu735. The short motif at 642–645 (SRFD) is the Arginine finger element.

Belongs to the MCM family. In terms of assembly, component of the mcm2-7 complex (RLF-M). The complex forms a toroidal hexameric ring with the proposed subunit order mcm2-mcm6-mcm4-mcm7-mcm3-mcm5. The heterodimer of mmcm3/mcm5 interacts with mcm4, mmcm6, mcm7 and weakly with mcm2. Component of the CMG helicase complex, composed of the mcm2-7 complex, the GINS complex and cdc45. Hyperphosphorylated during mitosis in a mechanism requiring cdc2-cyclin B and other kinases. Undergoes dephosphorylation after exiting mitosis, existing in a partially phosphorylated state in the cytosolic interphase mcm complex which associates with the pre-replication complexes (pre-Rcs). Complete dephosphorylation inactivates the mcm complex, preventing its binding to chromatin. Becomes actively phosphorylated during S phase once the mcm complex is assembled on the chromatin. This chromatin-associated phosphorylation occurs during the activation of the pre-Rcs and is independent of cdks. Phosphorylated by the cdc7-dbf4b complex.

It localises to the nucleus. Its subcellular location is the chromosome. It carries out the reaction ATP + H2O = ADP + phosphate + H(+). Acts as a component of the MCM2-7 complex (MCM complex) which is the replicative helicase essential for 'once per cell cycle' DNA replication initiation and elongation in eukaryotic cells. Core component of CDC45-MCM-GINS (CMG) helicase, the molecular machine that unwinds template DNA during replication, and around which the replisome is built. The active ATPase sites in the MCM2-7 ring are formed through the interaction surfaces of two neighboring subunits such that a critical structure of a conserved arginine finger motif is provided in trans relative to the ATP-binding site of the Walker A box of the adjacent subunit. The six ATPase active sites, however, are likely to contribute differentially to the complex helicase activity. This Xenopus tropicalis (Western clawed frog) protein is DNA replication licensing factor mcm4.